We begin with the raw amino-acid sequence, 116 residues long: MAQYRVGRLEQEIQREVTDILLKRVRDPRVEGVTVTGVEVTGDLQQATIYYSILSDKASSAEKTAAGLKKATGLIRSELGSRLSIYKTPELTFEQDGSVRYGSRIDELLNDLHHQD.

It belongs to the RbfA family. Monomer. Binds 30S ribosomal subunits, but not 50S ribosomal subunits or 70S ribosomes.

The protein resides in the cytoplasm. One of several proteins that assist in the late maturation steps of the functional core of the 30S ribosomal subunit. Associates with free 30S ribosomal subunits (but not with 30S subunits that are part of 70S ribosomes or polysomes). Required for efficient processing of 16S rRNA. May interact with the 5'-terminal helix region of 16S rRNA. This chain is Ribosome-binding factor A, found in Levilactobacillus brevis (strain ATCC 367 / BCRC 12310 / CIP 105137 / JCM 1170 / LMG 11437 / NCIMB 947 / NCTC 947) (Lactobacillus brevis).